Reading from the N-terminus, the 217-residue chain is MRMRHKPWANDFLAENADIAISDPAQYKGRWNTVFGNDNPIHIEVGTGKGQFISGMAKQNPDINYIGIELFKSVIVTAVQKVKDSGAHNVRLLNIDAETLNDVFERGEIKRVYLNFSDPWPKNRHEKRRLTFKTFLKKYEEVMGETGEIHFKTDNRGLFEYSLKSFSEYGLLLTEVSLDLHNSDPKGNIMTEYEEKFSALGQPIYRAEVEWRTKDRL.

The S-adenosyl-L-methionine site is built by Glu-44, Glu-69, Asp-96, and Asp-118. Residue Asp-118 is part of the active site. Lys-122 contacts substrate. The segment at 124–129 (RHEKRR) is interaction with RNA. Substrate-binding positions include Asp-154 and 191–194 (TEYE).

Belongs to the class I-like SAM-binding methyltransferase superfamily. TrmB family.

The catalysed reaction is guanosine(46) in tRNA + S-adenosyl-L-methionine = N(7)-methylguanosine(46) in tRNA + S-adenosyl-L-homocysteine. The protein operates within tRNA modification; N(7)-methylguanine-tRNA biosynthesis. In terms of biological role, catalyzes the formation of N(7)-methylguanine at position 46 (m7G46) in tRNA. This Bacillus velezensis (strain DSM 23117 / BGSC 10A6 / LMG 26770 / FZB42) (Bacillus amyloliquefaciens subsp. plantarum) protein is tRNA (guanine-N(7)-)-methyltransferase.